A 279-amino-acid polypeptide reads, in one-letter code: Phycobilisome 34.5 kDa linker polypeptide, phycoerythrocyanin-associated, rod (279 aa).

The PBS-linker domain maps to 2–178; the sequence is STSVAERLAI…LYRGRANSDN (177 aa). Residues 226–278 form the CpcD-like domain; that stretch reads ARMFIVEAIAGTLNTNVAVRRSRQVYTVPYDRLSATYQEIHKRGGKIVKITPA.

It belongs to the phycobilisome linker protein family.

The protein localises to the cellular thylakoid membrane. In terms of biological role, rod linker protein, associated with phycoerythrocyanin. Linker polypeptides determine the state of aggregation and the location of the disk-shaped phycobiliprotein units within the phycobilisome and modulate their spectroscopic properties in order to mediate a directed and optimal energy transfer. The polypeptide is Phycobilisome 34.5 kDa linker polypeptide, phycoerythrocyanin-associated, rod (pecC) (Mastigocladus laminosus (Fischerella sp.)).